The chain runs to 1135 residues: Exportin-5 (1135 aa).

An Importin N-terminal domain is found at 32–117 (SQVFLEEIKT…KEKLVTILVD (86 aa)). The tract at residues 630–631 (TE) is pre-siRNA binding.

The protein belongs to the exportin family. As to quaternary structure, found in a nuclear export complex with RanGTP, exportin and pre-miRNA.

The protein localises to the nucleus. Its subcellular location is the cytoplasm. In terms of biological role, mediates the nuclear export of proteins bearing a double-stranded RNA binding domain (dsRBD) and double-stranded RNAs (cargos). Mediates the nuclear export of micro-RNA precursors, which form short hairpins. This is Exportin-5 (xpo5) from Dictyostelium discoideum (Social amoeba).